The following is a 223-amino-acid chain: Deoxyribose-phosphate aldolase (223 aa).

Catalysis depends on Asp-91, which acts as the Proton donor/acceptor. Lys-154 (schiff-base intermediate with acetaldehyde) is an active-site residue. Lys-183 acts as the Proton donor/acceptor in catalysis.

Belongs to the DeoC/FbaB aldolase family. DeoC type 1 subfamily.

It is found in the cytoplasm. It catalyses the reaction 2-deoxy-D-ribose 5-phosphate = D-glyceraldehyde 3-phosphate + acetaldehyde. It functions in the pathway carbohydrate degradation; 2-deoxy-D-ribose 1-phosphate degradation; D-glyceraldehyde 3-phosphate and acetaldehyde from 2-deoxy-alpha-D-ribose 1-phosphate: step 2/2. Catalyzes a reversible aldol reaction between acetaldehyde and D-glyceraldehyde 3-phosphate to generate 2-deoxy-D-ribose 5-phosphate. This Geobacillus thermodenitrificans (strain NG80-2) protein is Deoxyribose-phosphate aldolase.